We begin with the raw amino-acid sequence, 435 residues long: Mitochondrial distribution and morphology protein 12 (435 aa).

Residues 1–435 (MSIEVDWGAA…VYPSFWTFLV (435 aa)) enclose the SMP-LTD domain. Disordered stretches follow at residues 73-113 (DEDD…AINH) and 186-268 (WNDS…TSEE). The span at 96–113 (THPELNESSFRDDNAINH) shows a compositional bias: basic and acidic residues. The segment covering 218-238 (SSNPTSRPSTSSTLPSHPSGS) has biased composition (low complexity). Residues 251 to 268 (HGSHPEEHGHLDDPTSEE) are compositionally biased toward basic and acidic residues.

It belongs to the MDM12 family. As to quaternary structure, component of the ER-mitochondria encounter structure (ERMES) or MDM complex, composed of mmm1, mdm10, mdm12 and mdm34. A mmm1 homodimer associates with one molecule of mdm12 on each side in a pairwise head-to-tail manner, and the SMP-LTD domains of mmm1 and mdm12 generate a continuous hydrophobic tunnel for phospholipid trafficking.

It localises to the mitochondrion outer membrane. The protein resides in the endoplasmic reticulum membrane. In terms of biological role, component of the ERMES/MDM complex, which serves as a molecular tether to connect the endoplasmic reticulum (ER) and mitochondria. Components of this complex are involved in the control of mitochondrial shape and protein biogenesis, and function in nonvesicular lipid trafficking between the ER and mitochondria. Mdm12 is required for the interaction of the ER-resident membrane protein mmm1 and the outer mitochondrial membrane-resident beta-barrel protein mdm10. The mdm12-mmm1 subcomplex functions in the major beta-barrel assembly pathway that is responsible for biogenesis of all mitochondrial outer membrane beta-barrel proteins, and acts in a late step after the SAM complex. The mdm10-mdm12-mmm1 subcomplex further acts in the TOM40-specific pathway after the action of the mdm12-mmm1 complex. Essential for establishing and maintaining the structure of mitochondria and maintenance of mtDNA nucleoids. The polypeptide is Mitochondrial distribution and morphology protein 12 (Aspergillus niger (strain ATCC MYA-4892 / CBS 513.88 / FGSC A1513)).